A 264-amino-acid polypeptide reads, in one-letter code: MKKALLVVSFGTSYHDTCEKNIVACERDLAASCPDRDLFRAFTSGMIIRKLRQRDGIDIDTPLQALQKLAAQGYQDVAIQSLHIINGDEYEKIVREVQLLRPLFTRLTLGVPLLSSHNDYVQLMQALRQQMPSLRQTEKVVFMGHGASHHAFAAYACLDHMMTAQRFPARVGAVESYPEVDILIDSLRDEGVTGVHLMPLMLVAGDHAINDMASDDGDSWKMRFNAAGIPATPWLSGLGENPAIRAMFVAHLHQALNMAVEEAA.

Co-sirohydrochlorin is bound by residues G45, I84, I85, D88, E89, and K92. H145 functions as the Proton acceptor in the catalytic mechanism. Co(2+) contacts are provided by H145 and E175. Co-sirohydrochlorin contacts are provided by L202, V203, and H207. H207 contributes to the Co(2+) binding site.

It belongs to the CbiK family. In terms of assembly, homotrimer.

It catalyses the reaction Co-sirohydrochlorin + 2 H(+) = sirohydrochlorin + Co(2+). The catalysed reaction is Co-precorrin-2 + 3 H(+) = precorrin-2 + Co(2+). It participates in cofactor biosynthesis; adenosylcobalamin biosynthesis; cob(II)yrinate a,c-diamide from sirohydrochlorin (anaerobic route): step 1/10. Cobalt chelatase responsible for the insertion of cobalt during anaerobic cobalamin biosynthesis. Can catalyze the insertion of Co(2+) into either sirohydrochlorin or precorrin-2. It is not clear which is the natural substrate in Salmonella. The sequence is that of Sirohydrochlorin cobaltochelatase from Salmonella typhimurium (strain LT2 / SGSC1412 / ATCC 700720).